The chain runs to 279 residues: Large ribosomal subunit protein uL2 (279 aa).

The segment at 222–279 (GVAMNPVDHPHGGGEGRTSGGRHPVTPAGKPTKGAKTRVNKATDKFIIRSRHKAKKGR) is disordered. A compositionally biased stretch (basic residues) spans 269–279 (IRSRHKAKKGR).

It belongs to the universal ribosomal protein uL2 family. Part of the 50S ribosomal subunit. Forms a bridge to the 30S subunit in the 70S ribosome.

Its function is as follows. One of the primary rRNA binding proteins. Required for association of the 30S and 50S subunits to form the 70S ribosome, for tRNA binding and peptide bond formation. It has been suggested to have peptidyltransferase activity; this is somewhat controversial. Makes several contacts with the 16S rRNA in the 70S ribosome. This is Large ribosomal subunit protein uL2 from Caulobacter vibrioides (strain ATCC 19089 / CIP 103742 / CB 15) (Caulobacter crescentus).